The chain runs to 277 residues: Caspase-3 (277 aa).

Residue M1 is modified to N-acetylmethionine. Propeptides lie at residues 1–9 (MENNETSVD) and 10–28 (SKSI…KSMD). K11 carries the post-translational modification N6-acetyllysine. S26 carries the phosphoserine modification. Catalysis depends on residues H121 and C163. S-nitrosocysteine; in inhibited form is present on C163.

This sequence belongs to the peptidase C14A family. In terms of assembly, heterotetramer that consists of two anti-parallel arranged heterodimers, each one formed by a 17 kDa (p17) and a 12 kDa (p12) subunit. Interacts with BIRC6/bruce. In terms of processing, cleavage by granzyme B, caspase-6, caspase-8 and caspase-10 generates the two active subunits. Additional processing of the propeptides is likely due to the autocatalytic activity of the activated protease. Active heterodimers between the small subunit of caspase-7 protease and the large subunit of caspase-3 also occur and vice versa. S-nitrosylated on its catalytic site cysteine in unstimulated cell lines and denitrosylated upon activation of the Fas apoptotic pathway, associated with an increase in intracellular caspase activity. Fas therefore activates caspase-3 not only by inducing the cleavage of the caspase zymogen to its active subunits, but also by stimulating the denitrosylation of its active site thiol. Post-translationally, ubiquitinated by BIRC6; this activity is inhibited by DIABLO/SMAC.

It localises to the cytoplasm. The enzyme catalyses Strict requirement for an Asp residue at positions P1 and P4. It has a preferred cleavage sequence of Asp-Xaa-Xaa-Asp-|- with a hydrophobic amino-acid residue at P2 and a hydrophilic amino-acid residue at P3, although Val or Ala are also accepted at this position.. Its activity is regulated as follows. Inhibited by BIRC6; following inhibition of BIRC6-caspase binding by DIABLO/SMAC, BIRC6 is subjected to caspase cleavage, leading to an increase in active caspases. Its function is as follows. Involved in the activation cascade of caspases responsible for apoptosis execution. At the onset of apoptosis, it proteolytically cleaves poly(ADP-ribose) polymerase PARP1 at a '216-Asp-|-Gly-217' bond. Cleaves and activates sterol regulatory element binding proteins (SREBPs) between the basic helix-loop-helix leucine zipper domain and the membrane attachment domain. Cleaves and activates caspase-6, -7 and -9 (CASP6, CASP7 and CASP9, respectively). Cleaves and inactivates interleukin-18 (IL18). Triggers cell adhesion in sympathetic neurons through RET cleavage. Cleaves IL-1 beta between an Asp and an Ala, releasing the mature cytokine which is involved in a variety of inflammatory processes. Cleaves and inhibits serine/threonine-protein kinase AKT1 in response to oxidative stress. Acts as an inhibitor of type I interferon production during virus-induced apoptosis by mediating cleavage of antiviral proteins CGAS, IRF3 and MAVS, thereby preventing cytokine overproduction. Also involved in pyroptosis by mediating cleavage and activation of gasdermin-E (GSDME). Cleaves XRCC4 and phospholipid scramblase proteins XKR4, XKR8 and XKR9, leading to promote phosphatidylserine exposure on apoptotic cell surface. Cleaves BIRC6 following inhibition of BIRC6-caspase binding by DIABLO/SMAC. In Mesocricetus auratus (Golden hamster), this protein is Caspase-3 (CASP3).